Reading from the N-terminus, the 341-residue chain is Putative UPF0607 protein ENSP00000383783 (341 aa).

The span at 75-101 shows a compositional bias: basic and acidic residues; that stretch reads EVRAEEPKEATEVKDQVETQGQEDNKR. 2 disordered regions span residues 75–115 and 216–278; these read EVRA…TSSL and GLLM…PPPA. Positions 234–245 are enriched in low complexity; sequence SSRSSPSRAASH.

This sequence belongs to the UPF0607 family.

This Homo sapiens (Human) protein is Putative UPF0607 protein ENSP00000383783.